We begin with the raw amino-acid sequence, 333 residues long: Probable tRNA pseudouridine synthase B (333 aa).

The active-site Nucleophile is Asp66. Residues 233-308 (LKKIIIKDSA…EVVEITRVIM (76 aa)) enclose the PUA domain.

The protein belongs to the pseudouridine synthase TruB family. Type 2 subfamily.

It catalyses the reaction uridine(55) in tRNA = pseudouridine(55) in tRNA. Its function is as follows. Could be responsible for synthesis of pseudouridine from uracil-55 in the psi GC loop of transfer RNAs. The chain is Probable tRNA pseudouridine synthase B from Methanococcus maripaludis (strain DSM 14266 / JCM 13030 / NBRC 101832 / S2 / LL).